A 159-amino-acid chain; its full sequence is S-ribosylhomocysteine lyase 1 (159 aa).

Fe cation-binding residues include His54, His58, and Cys124.

Belongs to the LuxS family. Homodimer. Fe cation serves as cofactor.

It carries out the reaction S-(5-deoxy-D-ribos-5-yl)-L-homocysteine = (S)-4,5-dihydroxypentane-2,3-dione + L-homocysteine. Involved in the synthesis of autoinducer 2 (AI-2) which is secreted by bacteria and is used to communicate both the cell density and the metabolic potential of the environment. The regulation of gene expression in response to changes in cell density is called quorum sensing. Catalyzes the transformation of S-ribosylhomocysteine (RHC) to homocysteine (HC) and 4,5-dihydroxy-2,3-pentadione (DPD). In Lactobacillus delbrueckii subsp. bulgaricus (strain ATCC BAA-365 / Lb-18), this protein is S-ribosylhomocysteine lyase 1.